A 317-amino-acid chain; its full sequence is L-lactate dehydrogenase 2 (317 aa).

Residues valine 16, aspartate 37, lysine 42, tyrosine 68, and 82-83 (GA) each bind NAD(+). Residues glutamine 85 and arginine 91 each coordinate substrate. NAD(+)-binding positions include threonine 104, 121-123 (ASN), and threonine 146. 123–126 (NPVD) provides a ligand contact to substrate. 151-154 (DTTR) serves as a coordination point for substrate. The beta-D-fructose 1,6-bisphosphate site is built by arginine 156 and histidine 171. The active-site Proton acceptor is the histidine 178. Tyrosine 223 is modified (phosphotyrosine). Position 232 (threonine 232) interacts with substrate.

The protein belongs to the LDH/MDH superfamily. LDH family. Homotetramer.

Its subcellular location is the cytoplasm. The enzyme catalyses (S)-lactate + NAD(+) = pyruvate + NADH + H(+). The protein operates within fermentation; pyruvate fermentation to lactate; (S)-lactate from pyruvate: step 1/1. Its activity is regulated as follows. Allosterically activated by fructose 1,6-bisphosphate (FBP). Its function is as follows. Catalyzes the conversion of lactate to pyruvate. The chain is L-lactate dehydrogenase 2 from Enterococcus faecalis (strain ATCC 700802 / V583).